A 311-amino-acid polypeptide reads, in one-letter code: DNA repair and recombination protein RadA (311 aa).

104–111 (GEFGSGKS) provides a ligand contact to ATP.

It belongs to the eukaryotic RecA-like protein family.

Functionally, involved in DNA repair and in homologous recombination. Binds and assemble on single-stranded DNA to form a nucleoprotein filament. Hydrolyzes ATP in a ssDNA-dependent manner and promotes DNA strand exchange between homologous DNA molecules. This Methanobrevibacter smithii (strain ATCC 35061 / DSM 861 / OCM 144 / PS) protein is DNA repair and recombination protein RadA.